Reading from the N-terminus, the 596-residue chain is Genetic interactor of prohibitins 3, mitochondrial (596 aa).

The N-terminal 21 residues, 1–21 (MLNLCHALRGVRQFSCSVIVK), are a transit peptide targeting the mitochondrion. A CP-type G domain is found at 113–305 (ESTLNDILNY…LFDLPGYSTS (193 aa)).

The protein belongs to the TRAFAC class YlqF/YawG GTPase family. GEP3 subfamily.

The protein resides in the mitochondrion. Functionally, interacts genetically with prohibitins and thus may be involved in the mitochondrial lipid metabolism. This chain is Genetic interactor of prohibitins 3, mitochondrial (GEP3), found in Saccharomyces cerevisiae (strain AWRI796) (Baker's yeast).